Here is a 61-residue protein sequence, read N- to C-terminus: Small ribosomal subunit protein uS14 (61 aa).

Residues Cys-24, Cys-27, Cys-40, and Cys-43 each coordinate Zn(2+).

This sequence belongs to the universal ribosomal protein uS14 family. Zinc-binding uS14 subfamily. As to quaternary structure, part of the 30S ribosomal subunit. Contacts proteins S3 and S10. Requires Zn(2+) as cofactor.

Binds 16S rRNA, required for the assembly of 30S particles and may also be responsible for determining the conformation of the 16S rRNA at the A site. The protein is Small ribosomal subunit protein uS14 of Maridesulfovibrio salexigens (strain ATCC 14822 / DSM 2638 / NCIMB 8403 / VKM B-1763) (Desulfovibrio salexigens).